The primary structure comprises 391 residues: Glycerol-3-phosphate dehydrogenase [NAD(+)] 1 (391 aa).

Residues 41-46, Phe-129, Lys-152, and Ala-185 contribute to the NAD(+) site; that span reads GSGNWG. Lys-152 contacts substrate. Lys-245 acts as the Proton acceptor in catalysis. Residues Arg-310 and Gln-339 each coordinate NAD(+). 310 to 311 lines the substrate pocket; it reads RN.

The protein belongs to the NAD-dependent glycerol-3-phosphate dehydrogenase family.

The protein resides in the cytoplasm. It catalyses the reaction sn-glycerol 3-phosphate + NAD(+) = dihydroxyacetone phosphate + NADH + H(+). The chain is Glycerol-3-phosphate dehydrogenase [NAD(+)] 1 (GPD1) from Saccharomyces uvarum (Yeast).